The primary structure comprises 120 residues: Large ribosomal subunit protein uL22 (120 aa).

The protein belongs to the universal ribosomal protein uL22 family. In terms of assembly, part of the 50S ribosomal subunit.

In terms of biological role, this protein binds specifically to 23S rRNA; its binding is stimulated by other ribosomal proteins, e.g. L4, L17, and L20. It is important during the early stages of 50S assembly. It makes multiple contacts with different domains of the 23S rRNA in the assembled 50S subunit and ribosome. The globular domain of the protein is located near the polypeptide exit tunnel on the outside of the subunit, while an extended beta-hairpin is found that lines the wall of the exit tunnel in the center of the 70S ribosome. The sequence is that of Large ribosomal subunit protein uL22 from Rippkaea orientalis (strain PCC 8801 / RF-1) (Cyanothece sp. (strain PCC 8801)).